We begin with the raw amino-acid sequence, 870 residues long: Aldehyde-alcohol dehydrogenase 2 (870 aa).

The active site involves C252. Residue G431–G436 coordinates NAD(+).

It in the N-terminal section; belongs to the aldehyde dehydrogenase family. The protein in the C-terminal section; belongs to the iron-containing alcohol dehydrogenase family. As to quaternary structure, seems to form a rod shaped homomer composed of at least 20 identical subunits. Zn(2+) is required as a cofactor. The cofactor is Fe(2+).

The catalysed reaction is a primary alcohol + NAD(+) = an aldehyde + NADH + H(+). The enzyme catalyses a secondary alcohol + NAD(+) = a ketone + NADH + H(+). It catalyses the reaction acetaldehyde + NAD(+) + CoA = acetyl-CoA + NADH + H(+). In terms of biological role, this enzyme has two NAD(+)-dependent activities: ADH and ACDH. May be a critical enzyme in the fermentative pathway. This Entamoeba histolytica (strain ATCC 30459 / HM-1:IMSS / ABRM) protein is Aldehyde-alcohol dehydrogenase 2 (ADH2).